We begin with the raw amino-acid sequence, 510 residues long: Arginine biosynthesis bifunctional protein ArgJ, chloroplastic (510 aa).

5 residues coordinate substrate: T223, K249, E359, N505, and T510.

This sequence belongs to the ArgJ family. Heterodimer of an alpha and a beta chain.

It is found in the plastid. Its subcellular location is the chloroplast. The catalysed reaction is N(2)-acetyl-L-ornithine + L-glutamate = N-acetyl-L-glutamate + L-ornithine. It carries out the reaction L-glutamate + acetyl-CoA = N-acetyl-L-glutamate + CoA + H(+). The protein operates within amino-acid biosynthesis; L-arginine biosynthesis; L-ornithine and N-acetyl-L-glutamate from L-glutamate and N(2)-acetyl-L-ornithine (cyclic): step 1/1. Its pathway is amino-acid biosynthesis; L-arginine biosynthesis; N(2)-acetyl-L-ornithine from L-glutamate: step 1/4. Catalyzes two activities which are involved in the cyclic version of arginine biosynthesis: the synthesis of acetylglutamate from glutamate and acetyl-CoA, and of ornithine by transacetylation between acetylornithine and glutamate. The sequence is that of Arginine biosynthesis bifunctional protein ArgJ, chloroplastic from Vitis vinifera (Grape).